The primary structure comprises 838 residues: Envelope glycoprotein H (838 aa).

The N-terminal stretch at 1–18 (MGNGLWFVGVIILGVAWG) is a signal peptide. The Virion surface segment spans residues 19-803 (QVHDWTEQTD…DTQPVAAIAP (785 aa)). Residues Asn73 and Asn120 are each glycosylated (N-linked (GlcNAc...) asparagine; by host). Positions 174–204 (FPRGDNVATASHPSGPRDTPPPRPPVGARRH) are disordered. An N-linked (GlcNAc...) asparagine; by host glycan is attached at Asn216. The interval 259–323 (DAALVRARYG…PGGPRYRVFV (65 aa)) is interaction with gL. Asn332, Asn437, Asn670, and Asn784 each carry an N-linked (GlcNAc...) asparagine; by host glycan. The chain crosses the membrane as a helical span at residues 804-824 (GFLAASALGVVMITAALAGIL). The Intravirion segment spans residues 825–838 (KVLRTSVPFFWRRE).

This sequence belongs to the herpesviridae glycoprotein H family. As to quaternary structure, interacts with glycoprotein L (gL); this interaction is necessary for the correct processing and cell surface expression of gH. The heterodimer gH/gL seems to interact with gB trimers during fusion. Associates with the gB-gH/gL-gD complex. Interacts with VP16. In terms of processing, N-glycosylated, O-glycosylated, and sialylated.

It is found in the virion membrane. Its subcellular location is the host cell membrane. The protein resides in the host endosome membrane. The heterodimer glycoprotein H-glycoprotein L is required for the fusion of viral and plasma membranes leading to virus entry into the host cell. Following initial binding to host receptor, membrane fusion is mediated by the fusion machinery composed of gB and the heterodimer gH/gL. May also be involved in the fusion between the virion envelope and the outer nuclear membrane during virion morphogenesis. This chain is Envelope glycoprotein H, found in Human herpesvirus 1 (strain 17) (HHV-1).